The following is a 408-amino-acid chain: Secreted effector protein SseJ (408 aa).

Ser-151 serves as the catalytic Nucleophile. Catalysis depends on residues Asp-381 and His-384.

Belongs to the 'GDSL' lipolytic enzyme family. Interacts with RhoA and indirectly with SifA.

The protein localises to the secreted. The protein resides in the host cytoplasm. In terms of biological role, effector proteins function to alter host cell physiology and promote bacterial survival in host tissues. This protein is required for endosomal tubulation and negatively regulates the formation of Salmonella-induced filaments (Sifs) in epithelial cells. Has both deacylase and esterification activities in vitro, but esterification is probably the dominant activity in host cells. Significantly contributes to cholesterol esterification, which reduces cellular cholesterol in cells and abrogates the ability of SifA to associate with cholesterol and LAMP-1 vesicles. The chain is Secreted effector protein SseJ (sseJ) from Salmonella typhimurium (strain LT2 / SGSC1412 / ATCC 700720).